Consider the following 341-residue polypeptide: Methionine import ATP-binding protein MetN 2 (341 aa).

The ABC transporter domain occupies 2–241 (INLQNVSKIY…PKEEMTKRFV (240 aa)). 38-45 (GYSGAGKS) is a binding site for ATP.

Belongs to the ABC transporter superfamily. Methionine importer (TC 3.A.1.24) family. In terms of assembly, the complex is composed of two ATP-binding proteins (MetN), two transmembrane proteins (MetI) and a solute-binding protein (MetQ).

Its subcellular location is the cell membrane. The catalysed reaction is L-methionine(out) + ATP + H2O = L-methionine(in) + ADP + phosphate + H(+). The enzyme catalyses D-methionine(out) + ATP + H2O = D-methionine(in) + ADP + phosphate + H(+). Part of the ABC transporter complex MetNIQ involved in methionine import. Responsible for energy coupling to the transport system. The sequence is that of Methionine import ATP-binding protein MetN 2 from Bacillus licheniformis (strain ATCC 14580 / DSM 13 / JCM 2505 / CCUG 7422 / NBRC 12200 / NCIMB 9375 / NCTC 10341 / NRRL NRS-1264 / Gibson 46).